A 308-amino-acid chain; its full sequence is Protoheme IX farnesyltransferase (308 aa).

Transmembrane regions (helical) follow at residues Leu20–Ile40, Ala50–Ala70, Asn102–Thr122, Leu124–Trp144, Thr149–Ser169, Ala170–Thr190, Leu227–Gly249, and Tyr288–His308.

The protein belongs to the UbiA prenyltransferase family. Protoheme IX farnesyltransferase subfamily.

Its subcellular location is the cell membrane. The enzyme catalyses heme b + (2E,6E)-farnesyl diphosphate + H2O = Fe(II)-heme o + diphosphate. It functions in the pathway porphyrin-containing compound metabolism; heme O biosynthesis; heme O from protoheme: step 1/1. In terms of biological role, converts heme B (protoheme IX) to heme O by substitution of the vinyl group on carbon 2 of heme B porphyrin ring with a hydroxyethyl farnesyl side group. This Mycobacterium tuberculosis (strain ATCC 25618 / H37Rv) protein is Protoheme IX farnesyltransferase.